Reading from the N-terminus, the 252-residue chain is MESPAGRTPAPGALPYYVAFSQLLGLTVVAVTGAWLGAYRGGIAWESALQFNVHPLCMIIGLVFLQGDALLVYRVFRNEAKRTTKILHGLLHVLAFVIALVGLVAVFDYHRKKGIADLYSLHSWCGILVFVLFLAQWLVGLGFFLFPGASFSLRSRYRPQHVFFGAAIFLLSVGTALLGLKEALLFQLGTKYSAFESEGVLANVLGLLLVAFGAVVLYILTRADWKRPLQAEEQALSMDFKTLTEGDSPSSQ.

Met-1 is subject to N-acetylmethionine. Residues 1–17 (MESPAGRTPAPGALPYY) are Cytoplasmic-facing. A helical membrane pass occupies residues 18–38 (VAFSQLLGLTVVAVTGAWLGA). The Cytochrome b561 domain occupies 20–221 (FSQLLGLTVV…FGAVVLYILT (202 aa)). Over 39–52 (YRGGIAWESALQFN) the chain is Vesicular. The chain crosses the membrane as a helical span at residues 53 to 73 (VHPLCMIIGLVFLQGDALLVY). Positions 54, 74, and 81 each coordinate heme b. Residues 74 to 85 (RVFRNEAKRTTK) are Cytoplasmic-facing. Positions 81 and 85 each coordinate L-ascorbate. A helical transmembrane segment spans residues 86–106 (ILHGLLHVLAFVIALVGLVAV). Residues His-88, 117-120 (DLYS), and His-122 each bind heme b. The Vesicular segment spans residues 107 to 125 (FDYHRKKGIADLYSLHSWC). The chain crosses the membrane as a helical span at residues 126-146 (GILVFVLFLAQWLVGLGFFLF). Residues 147-159 (PGASFSLRSRYRP) are Cytoplasmic-facing. Arg-154 provides a ligand contact to L-ascorbate. The chain crosses the membrane as a helical span at residues 160–180 (QHVFFGAAIFLLSVGTALLGL). 2 residues coordinate heme b: His-161 and Glu-182. Over 181 to 199 (KEALLFQLGTKYSAFESEG) the chain is Vesicular. Residues 200–220 (VLANVLGLLLVAFGAVVLYIL) traverse the membrane as a helical segment. The Cytoplasmic segment spans residues 221–252 (TRADWKRPLQAEEQALSMDFKTLTEGDSPSSQ). A heme b-binding site is contributed by Lys-226. Phosphoserine occurs at positions 248 and 250.

Heme b is required as a cofactor.

It is found in the cytoplasmic vesicle. The protein resides in the secretory vesicle. The protein localises to the chromaffin granule membrane. It carries out the reaction monodehydro-L-ascorbate radical(out) + L-ascorbate(in) = monodehydro-L-ascorbate radical(in) + L-ascorbate(out). Functionally, transmembrane reductase that uses ascorbate as an electron donor in the cytoplasm and transfers electrons across membranes to reduce monodehydro-L-ascorbate radical in the lumen of secretory vesicles. It is therefore involved the regeneration and homeostasis within secretory vesicles of ascorbate which in turn provides reducing equivalents needed to support the activity of intravesicular enzymes. The sequence is that of Transmembrane ascorbate-dependent reductase CYB561 (CYB561) from Sus scrofa (Pig).